Reading from the N-terminus, the 154-residue chain is MKLHDSLAENKSIRLQAEAETWQDAVKIGVDLLVAADVVEPRYYQAILDAVEQHGPYFVLAPGLAMPHGRPEEGVKKTGFALVTLKKPLEFNHEDNDPVDILITMAAVDANTHQEVGIMQIVNLFEDEENFDRLRACRTEQEVLDLIDRTNAAA.

Residues Ser-6–Thr-150 form the PTS EIIA type-2 domain. The Tele-phosphohistidine intermediate role is filled by His-68. His-68 is modified (phosphohistidine).

Its subcellular location is the cytoplasm. Functionally, the phosphoenolpyruvate-dependent sugar phosphotransferase system (sugar PTS), a major carbohydrate active transport system, catalyzes the phosphorylation of incoming sugar substrates concomitantly with their translocation across the cell membrane. The enzyme II UlaABC PTS system is involved in ascorbate transport. The sequence is that of Ascorbate-specific PTS system EIIA component (ulaC) from Shigella flexneri.